The chain runs to 1451 residues: Dicer-like protein 2 (1451 aa).

Residues 34 to 53 (YDGHLSEEDSPGGKPRPKEQ) are disordered. In terms of domain architecture, Helicase ATP-binding spans 70–247 (MLEASLKENI…LKRLESTLDA (178 aa)). 83–90 (MDTGSGKT) lines the ATP pocket. Positions 190–193 (DEAH) match the DEAH box motif. Residues 412–582 (KVQRIIEVLL…RLEAIENSEA (171 aa)) form the Helicase C-terminal domain. A Dicer dsRNA-binding fold domain is found at 603–704 (AKSHLQHFVS…LPLRDRLELE (102 aa)). RNase III domains are found at residues 968 to 1111 (AAEL…VDGG) and 1153 to 1351 (LQLL…VDAG). Residue E1192 participates in Mg(2+) binding. The interval 1253-1272 (EGDSDSKSSGDSTSDKASPR) is disordered. Mg(2+) is bound by residues D1337 and E1340.

It belongs to the helicase family. Dicer subfamily. Mg(2+) serves as cofactor. It depends on Mn(2+) as a cofactor.

Functionally, dicer-like endonuclease involved in cleaving double-stranded RNA in the RNA interference (RNAi) pathway. Produces 21 to 25 bp dsRNAs (siRNAs) which target the selective destruction of homologous RNAs leading to sequence-specific suppression of gene expression, called post-transcriptional gene silencing (PTGS). Part of a broad host defense, DCL-2 is involved in antiviral defense against mycoviruses like the hypovirus CHV1-EP713 and the reovirus MyRV1-Cp9B21. This is Dicer-like protein 2 (DCL-2) from Cryphonectria parasitica (Chestnut blight fungus).